Consider the following 163-residue polypeptide: ADP-ribosylation factor-like protein 2-binding protein (163 aa).

This sequence belongs to the ARL2BP family. In terms of assembly, interacts with GTP bound ARL2 and ARL3; the complex ARL2-ARL2BP as well as ARL2BP alone, binds to SLC25A4/ANT1. Interaction with ARL2 may be required for cilia basal body localization. Interacts with STAT3; interaction is enhanced with ARL2. Found in a complex with ARL2BP, ARL2 and SLC25A6. Found in a complex with ARL2, ARL2BP and SLC25A4. Interacts with STAT2, STAT3 and STAT4. Ubiquitous with higher expression in brain, especially in hippocampus and cortex. Also expressed in lung, cerebellum, liver, kidney, spleen and heart (at protein level).

The protein resides in the cytoplasm. The protein localises to the mitochondrion intermembrane space. It is found in the cytoskeleton. It localises to the microtubule organizing center. Its subcellular location is the centrosome. The protein resides in the nucleus. The protein localises to the spindle. It is found in the cilium basal body. Its function is as follows. Together with ARL2, plays a role in the nuclear translocation, retention and transcriptional activity of STAT3. May play a role as an effector of ARL2. The protein is ADP-ribosylation factor-like protein 2-binding protein (Arl2bp) of Rattus norvegicus (Rat).